The chain runs to 129 residues: Follitropin subunit beta (129 aa).

The first 18 residues, 1–18 (MKTLQFFFLFCCWKAICC), serve as a signal peptide directing secretion. 6 disulfides stabilise this stretch: cysteine 21–cysteine 69, cysteine 35–cysteine 84, cysteine 38–cysteine 122, cysteine 46–cysteine 100, cysteine 50–cysteine 102, and cysteine 105–cysteine 112. Asparagine 25 and asparagine 42 each carry an N-linked (GlcNAc...) asparagine glycan.

The protein belongs to the glycoprotein hormones subunit beta family. As to quaternary structure, heterodimer. The active follitropin is a heterodimer composed of an alpha chain/CGA shared with other hormones and a unique beta chain/FSHB shown here.

Its subcellular location is the secreted. In terms of biological role, together with the alpha chain CGA constitutes follitropin, the follicle-stimulating hormone, and provides its biological specificity to the hormone heterodimer. Binds FSHR, a G protein-coupled receptor, on target cells to activate downstream signaling pathways. Follitropin is involved in follicle development and spermatogenesis in reproductive organs. The protein is Follitropin subunit beta (FSHB) of Homo sapiens (Human).